Reading from the N-terminus, the 354-residue chain is Long form salivary protein D7L3 (354 aa).

An N-terminal signal peptide occupies residues 1–26; it reads MQLTPRSVHLVHLLLAATTLISPSWS.

Belongs to the PBP/GOBP family.

It localises to the secreted. Functionally, modulates blood feeding of female mosquitoes on vertebrate species by binding and sequestering different mediators involved in the host response. Binds serotonin with high affinity. Binds weakly noradrenaline and histamine. Does not bind tryptamine, octopamine, dopamine, adrenaline, leukotriene C4, leukotriene D4, leukotriene B4, ADP and U-46619, a stable analog of thromboxane A2. Inhibits agonist-induced platelet aggregation. Exhibits vasodilating activity. This chain is Long form salivary protein D7L3, found in Anopheles gambiae (African malaria mosquito).